Reading from the N-terminus, the 220-residue chain is U1 small nuclear ribonucleoprotein C (220 aa).

The Matrin-type zinc finger occupies 4–36 (YYCDYCDIYLTHDSMNARKAHNSGRNHVANVRD). Composition is skewed to pro residues over residues 88 to 130 (PGPP…PFLP) and 147 to 165 (PPFP…PFRP). Positions 88–220 (PGPPPPGAFP…HPDRLRMLGQ (133 aa)) are disordered. Residues 166 to 200 (PMGMGMPPAPAQAQAQGSPMGMPQQGQQGTFTPTQ) are compositionally biased toward low complexity. Residues 211–220 (HPDRLRMLGQ) are compositionally biased toward basic and acidic residues.

It belongs to the U1 small nuclear ribonucleoprotein C family. In terms of assembly, U1 snRNP is composed of the 7 core Sm proteins B/B', D1, D2, D3, E, F and G that assemble in a heptameric protein ring on the Sm site of the small nuclear RNA to form the core snRNP, and at least 3 U1 snRNP-specific proteins U1-70K, U1-A and U1-C. U1-C interacts with U1 snRNA and the 5' splice-site region of the pre-mRNA.

Its subcellular location is the nucleus. In terms of biological role, component of the spliceosomal U1 snRNP, which is essential for recognition of the pre-mRNA 5' splice-site and the subsequent assembly of the spliceosome. U1-C is directly involved in initial 5' splice-site recognition for both constitutive and regulated alternative splicing. The interaction with the 5' splice-site seems to precede base-pairing between the pre-mRNA and the U1 snRNA. Stimulates commitment or early (E) complex formation by stabilizing the base pairing of the 5' end of the U1 snRNA and the 5' splice-site region. The polypeptide is U1 small nuclear ribonucleoprotein C (Cryptococcus neoformans var. neoformans serotype D (strain JEC21 / ATCC MYA-565) (Filobasidiella neoformans)).